The sequence spans 287 residues: ATP synthase gamma chain (287 aa).

It belongs to the ATPase gamma chain family. F-type ATPases have 2 components, CF(1) - the catalytic core - and CF(0) - the membrane proton channel. CF(1) has five subunits: alpha(3), beta(3), gamma(1), delta(1), epsilon(1). CF(0) has three main subunits: a, b and c.

It localises to the cell inner membrane. Functionally, produces ATP from ADP in the presence of a proton gradient across the membrane. The gamma chain is believed to be important in regulating ATPase activity and the flow of protons through the CF(0) complex. The sequence is that of ATP synthase gamma chain from Xanthomonas axonopodis pv. citri (strain 306).